Reading from the N-terminus, the 509-residue chain is Coiled-coil domain-containing protein 181 (509 aa).

Disordered stretches follow at residues 27 to 122 (INDK…EDEE) and 287 to 368 (LAQV…NEKK). Composition is skewed to basic and acidic residues over residues 41–58 (ACKKEDDLDQELKEKETE) and 67–82 (DPDKPPKDEALPRRND). A compositionally biased stretch (polar residues) spans 319–333 (RIQSAGVSPVTSTYC). Coiled-coil stretches lie at residues 335–377 (SPRQ…VFKA) and 418–488 (LKKK…RSKQ). The segment covering 337–368 (RQKELQKQLERKRERLKREEEQRKLEEENEKK) has biased composition (basic and acidic residues).

Belongs to the CCDC181 family. Homodimer. Interacts with HOOK1. Interacts with HOOK2. Interacts with HOOK3.

The protein resides in the cytoplasm. It is found in the cytoskeleton. It localises to the cell projection. Its subcellular location is the cilium. The protein localises to the flagellum. Microtubule-binding protein that localizes to the microtubular manchette of elongating spermatids. The polypeptide is Coiled-coil domain-containing protein 181 (Rattus norvegicus (Rat)).